The primary structure comprises 116 residues: Prefoldin subunit beta (116 aa).

The protein belongs to the prefoldin subunit beta family. As to quaternary structure, heterohexamer of two alpha and four beta subunits.

The protein localises to the cytoplasm. In terms of biological role, molecular chaperone capable of stabilizing a range of proteins. Seems to fulfill an ATP-independent, HSP70-like function in archaeal de novo protein folding. The chain is Prefoldin subunit beta from Methanobrevibacter smithii (strain ATCC 35061 / DSM 861 / OCM 144 / PS).